We begin with the raw amino-acid sequence, 152 residues long: Acidic phospholipase A2 1 (152 aa).

The signal sequence occupies residues 1-19 (MNPAYFLVLAAVCVSLLGA). Residues 20–27 (ANIPPQPL) constitute a propeptide that is removed on maturation. Disulfide bonds link C38/C104, C54/C151, C56/C72, C71/C132, C78/C125, C88/C118, and C111/C123. The Ca(2+) site is built by Y55, G57, and G59. Residue H75 is part of the active site. D76 contacts Ca(2+). D126 is an active-site residue.

The protein belongs to the phospholipase A2 family. Group I subfamily. D49 sub-subfamily. It depends on Ca(2+) as a cofactor. As to expression, expressed by the venom gland.

It is found in the secreted. The enzyme catalyses a 1,2-diacyl-sn-glycero-3-phosphocholine + H2O = a 1-acyl-sn-glycero-3-phosphocholine + a fatty acid + H(+). Functionally, PLA2 catalyzes the calcium-dependent hydrolysis of the 2-acyl groups in 3-sn-phosphoglycerides. The sequence is that of Acidic phospholipase A2 1 from Bungarus candidus (Malayan krait).